The sequence spans 117 residues: Zinc metalloproteinase/disintegrin (117 aa).

In terms of domain architecture, Disintegrin spans 36–117; the sequence is TPVSGNELLE…AGCPRNPFHA (82 aa). 6 disulfide bridges follow: Cys-50–Cys-65, Cys-52–Cys-60, Cys-59–Cys-82, Cys-73–Cys-79, Cys-78–Cys-103, and Cys-91–Cys-110. A Cell attachment site motif is present at residues 95 to 97; sequence RGD.

Belongs to the venom metalloproteinase (M12B) family. P-II subfamily. P-IIa sub-subfamily. Monomer. It depends on Zn(2+) as a cofactor. Expressed by the venom gland.

It is found in the secreted. Its function is as follows. Impairs hemostasis in the envenomed animal. Inhibits platelet aggregation and bone resorption. This is Zinc metalloproteinase/disintegrin from Gloydius halys (Chinese water mocassin).